The primary structure comprises 184 residues: Photosystem I assembly protein Ycf4 (184 aa).

2 consecutive transmembrane segments (helical) span residues 22 to 42 (FFWACILFLGSLGFLLVGTSS) and 57 to 77 (IPFFPQGIVMSFYGIAGLFIS).

This sequence belongs to the Ycf4 family.

The protein localises to the plastid. It localises to the chloroplast thylakoid membrane. Its function is as follows. Seems to be required for the assembly of the photosystem I complex. The polypeptide is Photosystem I assembly protein Ycf4 (Ceratophyllum demersum (Rigid hornwort)).